The sequence spans 293 residues: Acetylglutamate kinase (293 aa).

Residues 68 to 69 (GG), Arg-90, and Asn-189 contribute to the substrate site.

Belongs to the acetylglutamate kinase family. ArgB subfamily.

It localises to the cytoplasm. It catalyses the reaction N-acetyl-L-glutamate + ATP = N-acetyl-L-glutamyl 5-phosphate + ADP. It functions in the pathway amino-acid biosynthesis; L-arginine biosynthesis; N(2)-acetyl-L-ornithine from L-glutamate: step 2/4. Functionally, catalyzes the ATP-dependent phosphorylation of N-acetyl-L-glutamate. This is Acetylglutamate kinase from Mycobacterium ulcerans (strain Agy99).